Consider the following 480-residue polypeptide: Gasdermin-C4 (480 aa).

The triggers pyroptosis stretch occupies residues 1 to 226 (MGYSFDRASK…TCVILPSATK (226 aa)).

Belongs to the gasdermin family. Homooligomer; homooligomeric ring-shaped pore complex containing 27-28 subunits when inserted in the membrane. In terms of processing, cleavage by CASP8 relieves autoinhibition by releasing the N-terminal moiety (Gasdermin-C4, N-terminal) that initiates pyroptosis. Palmitoylated.

The protein resides in the cytoplasm. It is found in the cytosol. It localises to the cell membrane. With respect to regulation, the full-length protein before cleavage is inactive: intramolecular interactions between N- and C-terminal domains mediate autoinhibition in the absence of activation signal. The intrinsic pyroptosis-inducing activity is carried by the released N-terminal moiety (Gasdermin-C4, N-terminal) following cleavage by caspase CASP8. In terms of biological role, this form constitutes the precursor of the pore-forming protein: upon cleavage, the released N-terminal moiety (Gasdermin-C4, N-terminal) binds to membranes and forms pores, triggering pyroptosis. Functionally, pore-forming protein that causes membrane permeabilization and pyroptosis. Produced by the cleavage of gasdermin-C4 by caspase CASP8 in response to death signals. After cleavage, moves to the plasma membrane where it strongly binds to membrane inner leaflet lipids. Homooligomerizes within the membrane and forms pores of 10-15 nanometers (nm) of inner diameter, triggering pyroptosis. The polypeptide is Gasdermin-C4 (Mus musculus (Mouse)).